The following is a 465-amino-acid chain: UDP-N-acetylmuramate--L-alanine ligase (465 aa).

112–118 (GTHGKTT) provides a ligand contact to ATP.

It belongs to the MurCDEF family.

Its subcellular location is the cytoplasm. The catalysed reaction is UDP-N-acetyl-alpha-D-muramate + L-alanine + ATP = UDP-N-acetyl-alpha-D-muramoyl-L-alanine + ADP + phosphate + H(+). Its pathway is cell wall biogenesis; peptidoglycan biosynthesis. Functionally, cell wall formation. This Burkholderia orbicola (strain MC0-3) protein is UDP-N-acetylmuramate--L-alanine ligase.